The following is a 341-amino-acid chain: tRNA N6-adenosine threonylcarbamoyltransferase (341 aa).

The Fe cation site is built by His118 and His122. Residues 141-145, Asp174, Gly187, and Asn281 each bind substrate; that span reads LVSGG. Asp309 contributes to the Fe cation binding site.

The protein belongs to the KAE1 / TsaD family. Fe(2+) serves as cofactor.

It localises to the cytoplasm. It catalyses the reaction L-threonylcarbamoyladenylate + adenosine(37) in tRNA = N(6)-L-threonylcarbamoyladenosine(37) in tRNA + AMP + H(+). In terms of biological role, required for the formation of a threonylcarbamoyl group on adenosine at position 37 (t(6)A37) in tRNAs that read codons beginning with adenine. Is involved in the transfer of the threonylcarbamoyl moiety of threonylcarbamoyl-AMP (TC-AMP) to the N6 group of A37, together with TsaE and TsaB. TsaD likely plays a direct catalytic role in this reaction. The sequence is that of tRNA N6-adenosine threonylcarbamoyltransferase from Desulfitobacterium hafniense (strain Y51).